A 454-amino-acid chain; its full sequence is Bifunctional protein GlmU (454 aa).

The pyrophosphorylase stretch occupies residues 1–230 (MSGRFAVILA…LSETMGVNDR (230 aa)). UDP-N-acetyl-alpha-D-glucosamine is bound by residues 9–12 (LAAG), lysine 23, glutamine 73, and 78–79 (GT). Aspartate 103 is a Mg(2+) binding site. UDP-N-acetyl-alpha-D-glucosamine is bound by residues glycine 140, glutamate 155, asparagine 170, and asparagine 228. Asparagine 228 provides a ligand contact to Mg(2+). The interval 231 to 251 (VALSQAEAAMRKRINEEWMRQ) is linker. The N-acetyltransferase stretch occupies residues 252–454 (GVTIIDPQTT…NKDNYVKKDV (203 aa)). UDP-N-acetyl-alpha-D-glucosamine is bound by residues arginine 333 and lysine 351. Catalysis depends on histidine 363, which acts as the Proton acceptor. Residues tyrosine 366 and asparagine 377 each contribute to the UDP-N-acetyl-alpha-D-glucosamine site. Acetyl-CoA contacts are provided by residues 386-387 (NY), serine 405, alanine 423, and arginine 440.

It in the N-terminal section; belongs to the N-acetylglucosamine-1-phosphate uridyltransferase family. This sequence in the C-terminal section; belongs to the transferase hexapeptide repeat family. As to quaternary structure, homotrimer. The cofactor is Mg(2+).

The protein resides in the cytoplasm. The catalysed reaction is alpha-D-glucosamine 1-phosphate + acetyl-CoA = N-acetyl-alpha-D-glucosamine 1-phosphate + CoA + H(+). It carries out the reaction N-acetyl-alpha-D-glucosamine 1-phosphate + UTP + H(+) = UDP-N-acetyl-alpha-D-glucosamine + diphosphate. Its pathway is nucleotide-sugar biosynthesis; UDP-N-acetyl-alpha-D-glucosamine biosynthesis; N-acetyl-alpha-D-glucosamine 1-phosphate from alpha-D-glucosamine 6-phosphate (route II): step 2/2. It participates in nucleotide-sugar biosynthesis; UDP-N-acetyl-alpha-D-glucosamine biosynthesis; UDP-N-acetyl-alpha-D-glucosamine from N-acetyl-alpha-D-glucosamine 1-phosphate: step 1/1. The protein operates within bacterial outer membrane biogenesis; LPS lipid A biosynthesis. In terms of biological role, catalyzes the last two sequential reactions in the de novo biosynthetic pathway for UDP-N-acetylglucosamine (UDP-GlcNAc). The C-terminal domain catalyzes the transfer of acetyl group from acetyl coenzyme A to glucosamine-1-phosphate (GlcN-1-P) to produce N-acetylglucosamine-1-phosphate (GlcNAc-1-P), which is converted into UDP-GlcNAc by the transfer of uridine 5-monophosphate (from uridine 5-triphosphate), a reaction catalyzed by the N-terminal domain. This chain is Bifunctional protein GlmU, found in Shouchella clausii (strain KSM-K16) (Alkalihalobacillus clausii).